The chain runs to 475 residues: Aspartyl/glutamyl-tRNA(Asn/Gln) amidotransferase subunit B (475 aa).

It belongs to the GatB/GatE family. GatB subfamily. Heterotrimer of A, B and C subunits.

It carries out the reaction L-glutamyl-tRNA(Gln) + L-glutamine + ATP + H2O = L-glutaminyl-tRNA(Gln) + L-glutamate + ADP + phosphate + H(+). It catalyses the reaction L-aspartyl-tRNA(Asn) + L-glutamine + ATP + H2O = L-asparaginyl-tRNA(Asn) + L-glutamate + ADP + phosphate + 2 H(+). In terms of biological role, allows the formation of correctly charged Asn-tRNA(Asn) or Gln-tRNA(Gln) through the transamidation of misacylated Asp-tRNA(Asn) or Glu-tRNA(Gln) in organisms which lack either or both of asparaginyl-tRNA or glutaminyl-tRNA synthetases. The reaction takes place in the presence of glutamine and ATP through an activated phospho-Asp-tRNA(Asn) or phospho-Glu-tRNA(Gln). The polypeptide is Aspartyl/glutamyl-tRNA(Asn/Gln) amidotransferase subunit B (Chlorobium chlorochromatii (strain CaD3)).